The chain runs to 157 residues: Cytochrome c-type biogenesis protein CcmE (157 aa).

Over 1–8 (MNPLRRKR) the chain is Cytoplasmic. Residues 9–29 (LLIILAVLGGVGLALTLALSA) form a helical; Signal-anchor for type II membrane protein membrane-spanning segment. The Periplasmic portion of the chain corresponds to 30 to 157 (LKENINLFYT…ASMPARQADR (128 aa)). Residues His-124 and Tyr-128 each coordinate heme. The interval 132-157 (EVSKALRESGQATPAPASMPARQADR) is disordered.

Belongs to the CcmE/CycJ family.

It is found in the cell inner membrane. Functionally, heme chaperone required for the biogenesis of c-type cytochromes. Transiently binds heme delivered by CcmC and transfers the heme to apo-cytochromes in a process facilitated by CcmF and CcmH. The protein is Cytochrome c-type biogenesis protein CcmE of Pseudomonas syringae pv. tomato (strain ATCC BAA-871 / DC3000).